Here is a 619-residue protein sequence, read N- to C-terminus: (-)-camphene synthase, chloroplastic (619 aa).

A chloroplast-targeting transit peptide spans methionine 1 to arginine 47. Residues aspartate 370, aspartate 374, and aspartate 522 each contribute to the Mg(2+) site. The DDXXD motif motif lies at aspartate 370 to aspartate 374.

Belongs to the terpene synthase family. Tpsd subfamily. Mg(2+) serves as cofactor. It depends on Mn(2+) as a cofactor.

Its subcellular location is the plastid. It is found in the chloroplast. It catalyses the reaction (2E)-geranyl diphosphate = (1S,4R)-camphene + diphosphate. It carries out the reaction (2E)-geranyl diphosphate = (1R,5R)-alpha-pinene + diphosphate. The enzyme catalyses (2E)-geranyl diphosphate = tricyclene + diphosphate. The catalysed reaction is (2E)-geranyl diphosphate = beta-myrcene + diphosphate. It catalyses the reaction (2E)-geranyl diphosphate = (1S,5S)-beta-pinene + diphosphate. It carries out the reaction (2E)-geranyl diphosphate = (1S,5S)-alpha-pinene + diphosphate. It participates in terpene metabolism; oleoresin biosynthesis. Its pathway is secondary metabolite biosynthesis; terpenoid biosynthesis. Its function is as follows. Monoterpene synthase (TPS) involved in the biosynthesis of monoterpene natural products included in conifer oleoresin secretions and volatile emissions; these compounds contribute to biotic and abiotic stress defense against herbivores and pathogens. Catalyzes the conversion of (2E)-geranyl diphosphate (GPP) to (-)-camphene, (+)-alpha-pinene and (-)-alpha-pinene, and, to a lower extent, to tricyclene, myrcene and (-)-beta-pinene. This Pinus contorta (Shore pine) protein is (-)-camphene synthase, chloroplastic.